Consider the following 476-residue polypeptide: Aspartyl/glutamyl-tRNA(Asn/Gln) amidotransferase subunit B (476 aa).

It belongs to the GatB/GatE family. GatB subfamily. Heterotrimer of A, B and C subunits.

The enzyme catalyses L-glutamyl-tRNA(Gln) + L-glutamine + ATP + H2O = L-glutaminyl-tRNA(Gln) + L-glutamate + ADP + phosphate + H(+). It catalyses the reaction L-aspartyl-tRNA(Asn) + L-glutamine + ATP + H2O = L-asparaginyl-tRNA(Asn) + L-glutamate + ADP + phosphate + 2 H(+). Allows the formation of correctly charged Asn-tRNA(Asn) or Gln-tRNA(Gln) through the transamidation of misacylated Asp-tRNA(Asn) or Glu-tRNA(Gln) in organisms which lack either or both of asparaginyl-tRNA or glutaminyl-tRNA synthetases. The reaction takes place in the presence of glutamine and ATP through an activated phospho-Asp-tRNA(Asn) or phospho-Glu-tRNA(Gln). The chain is Aspartyl/glutamyl-tRNA(Asn/Gln) amidotransferase subunit B from Listeria monocytogenes serovar 1/2a (strain ATCC BAA-679 / EGD-e).